Reading from the N-terminus, the 578-residue chain is GRAM domain-containing protein 4 (578 aa).

Disordered stretches follow at residues 23–58 (ESPNASDTECSDEIPLKVPRTSPRDSEELRDPAGPG) and 136–159 (TEEQMAQQPPKGQAQASNGAERRS). Phosphoserine is present on residues Ser24 and Ser28. The span at 44–53 (SPRDSEELRD) shows a compositional bias: basic and acidic residues. A coiled-coil region spans residues 83–143 (HLEIALLEKH…ARTEEQMAQQ (61 aa)). The next 3 membrane-spanning stretches (helical) occupy residues 240–260 (VYMNAVWHGWAIPLFLFLAIL), 334–354 (ITQKLYVALWAAFLASCFFPY), and 356–376 (LVGLAVGLYAGIKFFLIDFIF). Residues 415-435 (QTTSSRSYVPSAPAGLGKEED) are disordered. A GRAM domain is found at 445-523 (GNFHEIFNLT…VDITDIQKYK (79 aa)).

As to quaternary structure, interacts with RTN4 (isoform B). Expressed in lung and in primary lung squamous cell carcinoma (LSCC).

It localises to the mitochondrion membrane. Its subcellular location is the endoplasmic reticulum membrane. In terms of biological role, plays a role as a mediator of E2F1-induced apoptosis in the absence of p53/TP53. Plays a role as a mediator of E2F1-induced apoptosis in the absence of p53/TP53. Inhibits TLR9 response to nucelic acids and regulates TLR9-mediated innate immune response. The protein is GRAM domain-containing protein 4 of Homo sapiens (Human).